A 232-amino-acid chain; its full sequence is Orotidine 5'-phosphate decarboxylase (232 aa).

Residues Asp-11, Lys-33, 60-69 (DLKFHDIPTT), Thr-120, Arg-181, Gln-191, Gly-211, and Arg-212 each bind substrate. The active-site Proton donor is the Lys-62.

The protein belongs to the OMP decarboxylase family. Type 1 subfamily. Homodimer.

It carries out the reaction orotidine 5'-phosphate + H(+) = UMP + CO2. The protein operates within pyrimidine metabolism; UMP biosynthesis via de novo pathway; UMP from orotate: step 2/2. Its function is as follows. Catalyzes the decarboxylation of orotidine 5'-monophosphate (OMP) to uridine 5'-monophosphate (UMP). The sequence is that of Orotidine 5'-phosphate decarboxylase from Tolumonas auensis (strain DSM 9187 / NBRC 110442 / TA 4).